The sequence spans 156 residues: Snaclec 2 (156 aa).

A signal peptide spans 1-21; the sequence is MGRFIFLSSGLLVVFLSLSGA. 3 disulfide bridges follow: Cys25-Cys36, Cys53-Cys150, and Cys125-Cys142. In terms of domain architecture, C-type lectin spans 32–151; the sequence is FDQHCYRAFD…CGDDYPFVCK (120 aa).

Belongs to the snaclec family. As to quaternary structure, heterodimer; disulfide-linked. In terms of tissue distribution, expressed by the venom gland.

It is found in the secreted. In terms of biological role, interferes with one step of hemostasis (modulation of platelet aggregation, or coagulation cascade, for example). This chain is Snaclec 2, found in Bitis gabonica (Gaboon adder).